We begin with the raw amino-acid sequence, 289 residues long: uncharacterized protein (289 aa).

Positions 1–19 (MAKWLGAPLARGVSTATRA) are cleaved as a signal peptide. The next 2 helical transmembrane spans lie at 90–110 (GLLA…GWGV) and 257–277 (AALS…LVFA).

The protein localises to the cell membrane. This is an uncharacterized protein from Mycobacterium tuberculosis (strain CDC 1551 / Oshkosh).